The primary structure comprises 118 residues: Small ribosomal subunit protein uS13 (118 aa).

The tract at residues 92–118 (RRGHPLRGQRTRTNARTRKGPRKAIRK) is disordered.

Belongs to the universal ribosomal protein uS13 family. As to quaternary structure, part of the 30S ribosomal subunit. Forms a loose heterodimer with protein S19. Forms two bridges to the 50S subunit in the 70S ribosome.

Located at the top of the head of the 30S subunit, it contacts several helices of the 16S rRNA. In the 70S ribosome it contacts the 23S rRNA (bridge B1a) and protein L5 of the 50S subunit (bridge B1b), connecting the 2 subunits; these bridges are implicated in subunit movement. Contacts the tRNAs in the A and P-sites. In Xanthomonas campestris pv. campestris (strain ATCC 33913 / DSM 3586 / NCPPB 528 / LMG 568 / P 25), this protein is Small ribosomal subunit protein uS13.